A 367-amino-acid chain; its full sequence is Aminomethyltransferase (367 aa).

This sequence belongs to the GcvT family. As to quaternary structure, the glycine cleavage system is composed of four proteins: P, T, L and H.

The enzyme catalyses N(6)-[(R)-S(8)-aminomethyldihydrolipoyl]-L-lysyl-[protein] + (6S)-5,6,7,8-tetrahydrofolate = N(6)-[(R)-dihydrolipoyl]-L-lysyl-[protein] + (6R)-5,10-methylene-5,6,7,8-tetrahydrofolate + NH4(+). In terms of biological role, the glycine cleavage system catalyzes the degradation of glycine. The sequence is that of Aminomethyltransferase from Parasynechococcus marenigrum (strain WH8102).